The primary structure comprises 127 residues: Glycine cleavage system H protein 1 (127 aa).

The Lipoyl-binding domain occupies 20–101; it reads LLTVGITAYA…LGEAWFFRFR (82 aa). K60 carries the post-translational modification N6-lipoyllysine.

This sequence belongs to the GcvH family. The glycine cleavage system is composed of four proteins: P, T, L and H. Requires (R)-lipoate as cofactor.

Its function is as follows. The glycine cleavage system catalyzes the degradation of glycine. The H protein shuttles the methylamine group of glycine from the P protein to the T protein. This Pseudomonas aeruginosa (strain ATCC 15692 / DSM 22644 / CIP 104116 / JCM 14847 / LMG 12228 / 1C / PRS 101 / PAO1) protein is Glycine cleavage system H protein 1.